Consider the following 422-residue polypeptide: Gamma-glutamyl phosphate reductase (422 aa).

This sequence belongs to the gamma-glutamyl phosphate reductase family.

The protein localises to the cytoplasm. It catalyses the reaction L-glutamate 5-semialdehyde + phosphate + NADP(+) = L-glutamyl 5-phosphate + NADPH + H(+). It functions in the pathway amino-acid biosynthesis; L-proline biosynthesis; L-glutamate 5-semialdehyde from L-glutamate: step 2/2. In terms of biological role, catalyzes the NADPH-dependent reduction of L-glutamate 5-phosphate into L-glutamate 5-semialdehyde and phosphate. The product spontaneously undergoes cyclization to form 1-pyrroline-5-carboxylate. The polypeptide is Gamma-glutamyl phosphate reductase (Saccharophagus degradans (strain 2-40 / ATCC 43961 / DSM 17024)).